Reading from the N-terminus, the 213-residue chain is Guanylate kinase (213 aa).

In terms of domain architecture, Guanylate kinase-like spans 6–186 (GLLIILSSPS…TEERLKTIVS (181 aa)). 13–20 (SPSGAGKS) provides a ligand contact to ATP.

The protein belongs to the guanylate kinase family.

Its subcellular location is the cytoplasm. It catalyses the reaction GMP + ATP = GDP + ADP. In terms of biological role, essential for recycling GMP and indirectly, cGMP. The sequence is that of Guanylate kinase from Ruegeria pomeroyi (strain ATCC 700808 / DSM 15171 / DSS-3) (Silicibacter pomeroyi).